A 140-amino-acid chain; its full sequence is Gas vesicle protein O (140 aa).

The segment covering 1–14 has biased composition (basic and acidic residues); the sequence is MSDQGNEHANHDGI. The segment at 1–61 is disordered; sequence MSDQGNEHAN…DSTIGLSDAQ (61 aa). A compositionally biased stretch (polar residues) spans 39–56; sequence QTASDEAVSNQSPDSTIG.

This sequence belongs to the gas vesicle GvpO family. In terms of assembly, forms homodimers, forms a GvpN-GvpO heterodimer, interacts with GvpC, GvpF, GvpI and GvpL, might interact with GvpA.

Its subcellular location is the gas vesicle. The protein resides in the cytoplasm. Functionally, a minor component of the gas vesicle (GV), may play a role in transcription and/or RNA stability and/or in GV assembly. Gas vesicles are small, hollow, gas filled protein structures found in some microorganisms. They allow positioning of halobacteria at the optimal depth for growth in the poorly aerated shallow brine pools of their habitat. Its function is as follows. Expression of a 9.5 kb mc-vac DNA fragment containing 2 divergently transcribed regions (gvpD-gvpE-gvpF-gvpG-gvpH-gvpI-gvpJ-gvpK-gvpL-gvpM and gvpA-gvpC-gvpN-gvpO) allows H.volcanii to produce gas vesicles. This is Gas vesicle protein O from Haloferax mediterranei (strain ATCC 33500 / DSM 1411 / JCM 8866 / NBRC 14739 / NCIMB 2177 / R-4) (Halobacterium mediterranei).